The chain runs to 103 residues: Large ribosomal subunit protein bL21 (103 aa).

This sequence belongs to the bacterial ribosomal protein bL21 family. In terms of assembly, part of the 50S ribosomal subunit. Contacts protein L20.

Functionally, this protein binds to 23S rRNA in the presence of protein L20. This chain is Large ribosomal subunit protein bL21, found in Pseudomonas paraeruginosa (strain DSM 24068 / PA7) (Pseudomonas aeruginosa (strain PA7)).